We begin with the raw amino-acid sequence, 214 residues long: Alpha-S1-casein (214 aa).

The signal sequence occupies residues 1-15; the sequence is MKLLILTCLVAVALA. At serine 27 the chain carries Phosphoserine; in allele A. At serine 56 the chain carries Phosphoserine; in allele C. Residues serine 61 and serine 63 each carry the phosphoserine modification. The segment at 69–91 is disordered; that stretch reads MEDAKQMKAGSSSSSEEIVPNSA. A Phosphoserine; in alleles A and C modification is found at serine 79. The residue at position 80 (serine 80) is a Phosphoserine. A Phosphoserine; in alleles A and C modification is found at serine 81. Serine 82 bears the Phosphoserine mark. Serine 83 carries the phosphoserine; in alleles A and C modification. Position 90 is a phosphoserine (serine 90). Residues 105–111 form an opioid-like peptide sequence region; the sequence is RYLGYLE. Phosphoserine is present on serine 130.

This sequence belongs to the alpha-casein family. In terms of tissue distribution, mammary gland specific. Secreted in milk.

It localises to the secreted. Important role in the capacity of milk to transport calcium phosphate. The sequence is that of Alpha-S1-casein (CSN1S1) from Ovis aries (Sheep).